We begin with the raw amino-acid sequence, 230 residues long: Small ribosomal subunit protein uS7B (230 aa).

The interval 1–22 (MSEEVVESSSQEASQVIPQEQE) is disordered. Over residues 7 to 16 (ESSSQEASQV) the composition is skewed to low complexity.

This sequence belongs to the universal ribosomal protein uS7 family.

In Drosophila melanogaster (Fruit fly), this protein is Small ribosomal subunit protein uS7B (RpS5b).